The sequence spans 692 residues: Ribosome-releasing factor 2, mitochondrial (692 aa).

Residues 1-29 (MLKYAWQSGPKQRNRWLWHLSNQIWKRSY) constitute a mitochondrion transit peptide. Residues 31-310 (SKIRNIGILA…AVNAYLPAPE (280 aa)) enclose the tr-type G domain. GTP is bound by residues 40–47 (AHIDAGKT), 104–108 (DTPGH), and 158–161 (NKMD).

This sequence belongs to the TRAFAC class translation factor GTPase superfamily. Classic translation factor GTPase family. EF-G/EF-2 subfamily.

The protein localises to the mitochondrion. Functionally, mitochondrial GTPase that mediates the disassembly of ribosomes from messenger RNA at the termination of mitochondrial protein biosynthesis. Not involved in the GTP-dependent ribosomal translocation step during translation elongation. This chain is Ribosome-releasing factor 2, mitochondrial, found in Drosophila sechellia (Fruit fly).